The sequence spans 301 residues: UDP-N-acetylenolpyruvoylglucosamine reductase (301 aa).

The 165-residue stretch at 30 to 194 (VGGEPDYLVF…LSAKFALAPG (165 aa)) folds into the FAD-binding PCMH-type domain. Arg173 is a catalytic residue. Ser223 functions as the Proton donor in the catalytic mechanism. Glu293 is a catalytic residue.

This sequence belongs to the MurB family. Requires FAD as cofactor.

Its subcellular location is the cytoplasm. The enzyme catalyses UDP-N-acetyl-alpha-D-muramate + NADP(+) = UDP-N-acetyl-3-O-(1-carboxyvinyl)-alpha-D-glucosamine + NADPH + H(+). Its pathway is cell wall biogenesis; peptidoglycan biosynthesis. Cell wall formation. In Streptococcus pneumoniae (strain CGSP14), this protein is UDP-N-acetylenolpyruvoylglucosamine reductase.